Here is a 351-residue protein sequence, read N- to C-terminus: Translation initiation factor eIF2B subunit beta (351 aa).

Belongs to the eIF-2B alpha/beta/delta subunits family. As to quaternary structure, component of the translation initiation factor 2B (eIF2B) complex which is a heterodecamer of two sets of five different subunits: alpha, beta, gamma, delta and epsilon. Subunits alpha, beta and delta comprise a regulatory subcomplex and subunits epsilon and gamma comprise a catalytic subcomplex. Within the complex, the hexameric regulatory complex resides at the center, with the two heterodimeric catalytic subcomplexes bound on opposite sides.

The protein resides in the cytoplasm. It localises to the cytosol. Activated by the chemical integrated stress response (ISR) inhibitor ISRIB which stimulates guanine nucleotide exchange factor activity for both phosphorylated and unphosphorylated eIF2. Its function is as follows. Acts as a component of the translation initiation factor 2B (eIF2B) complex, which catalyzes the exchange of GDP for GTP on eukaryotic initiation factor 2 (eIF2) gamma subunit. Its guanine nucleotide exchange factor activity is repressed when bound to eIF2 complex phosphorylated on the alpha subunit, thereby limiting the amount of methionyl-initiator methionine tRNA available to the ribosome and consequently global translation is repressed. The chain is Translation initiation factor eIF2B subunit beta (EIF2B2) from Bos taurus (Bovine).